A 1115-amino-acid chain; its full sequence is DNA-directed RNA polymerase subunit beta (1115 aa).

The interval 1084 to 1115 (HEAGEGEDDEYFEEDEEAVDDEPMTFDDDDME) is disordered. Residues 1088–1115 (EGEDDEYFEEDEEAVDDEPMTFDDDDME) are compositionally biased toward acidic residues.

This sequence belongs to the RNA polymerase beta chain family. In terms of assembly, the RNAP catalytic core consists of 2 alpha, 1 beta, 1 beta' and 1 omega subunit. When a sigma factor is associated with the core the holoenzyme is formed, which can initiate transcription.

It catalyses the reaction RNA(n) + a ribonucleoside 5'-triphosphate = RNA(n+1) + diphosphate. DNA-dependent RNA polymerase catalyzes the transcription of DNA into RNA using the four ribonucleoside triphosphates as substrates. The protein is DNA-directed RNA polymerase subunit beta of Desulfitobacterium hafniense (strain DSM 10664 / DCB-2).